A 305-amino-acid polypeptide reads, in one-letter code: Heme A synthase (305 aa).

The Cytoplasmic portion of the chain corresponds to 1-6 (MKKFLK). Residues 7-27 (VWSVLTIICMTVVVFGGALVT) form a helical membrane-spanning segment. Over 28-63 (KTGSADGCGNSWPLCNGQLVRLTDVTPEKLIEFMHR) the chain is Extracellular. Cys35 and Cys42 are joined by a disulfide. Residue Glu59 is part of the active site. His62 lines the heme o pocket. The chain crosses the membrane as a helical span at residues 64-84 (MTTGISSIFVIVLAICAWIYM). The Cytoplasmic segment spans residues 85-92 (KNRRETKP). The helical transmembrane segment at 93–113 (LAIIAVLFLIIQALMGMAAVV) threads the bilayer. Over 114–122 (WGQNPYIMA) the chain is Extracellular. Residues 123-143 (LHFGISIICYASIVLLALMIF) form a helical membrane-spanning segment. Residue His124 participates in heme o binding. Over 144–160 (EVDRKFDARNLVMGTKL) the chain is Cytoplasmic. Residues 161-181 (RINIYALTIYTYLAVYTGALV) traverse the membrane as a helical segment. The Extracellular portion of the chain corresponds to 182–212 (RHEKASMAVPVWPFENGHFIMPTSVQDYVQY). A helical transmembrane segment spans residues 213–233 (FHRLAAFILIVWLLYVTWLVF). His214 is a heme b binding site. The Cytoplasmic portion of the chain corresponds to 234–240 (RDYRRYR). Residues 241 to 261 (VLTFSMVLSLVFIALQAVTGA) form a helical membrane-spanning segment. The Extracellular segment spans residues 262–271 (LSVYTGVNLY). A helical membrane pass occupies residues 272-292 (IALAHSLIITMLFALLCYLCL). Heme b is bound at residue His276. Topologically, residues 293–305 (LASRSKSNRLRIK) are cytoplasmic.

Belongs to the COX15/CtaA family. Type 1 subfamily. In terms of assembly, interacts with CtaB. It depends on heme b as a cofactor.

The protein localises to the cell membrane. The catalysed reaction is Fe(II)-heme o + 2 A + H2O = Fe(II)-heme a + 2 AH2. It functions in the pathway porphyrin-containing compound metabolism; heme A biosynthesis; heme A from heme O: step 1/1. Catalyzes the conversion of heme O to heme A by two successive hydroxylations of the methyl group at C8. The first hydroxylation forms heme I, the second hydroxylation results in an unstable dihydroxymethyl group, which spontaneously dehydrates, resulting in the formyl group of heme A. This chain is Heme A synthase, found in Listeria monocytogenes serotype 4b (strain F2365).